The primary structure comprises 242 residues: HTH-type transcriptional regulator GadW (242 aa).

The HTH araC/xylS-type domain maps to 139–236 (GKVERLISFD…GVTPHQFSQH (98 aa)). 2 consecutive DNA-binding regions (H-T-H motif) follow at residues 156–177 (RDIA…QDEN) and 203–226 (LHTI…RQYY).

Homodimer.

In terms of biological role, depending on the conditions (growth phase and medium), acts as a positive or negative regulator of gadA and gadBC. Repression occurs directly or via the repression of the expression of gadX. Activation occurs directly by the binding of GadW to the gadA and gadBC promoters. The sequence is that of HTH-type transcriptional regulator GadW (gadW) from Escherichia coli O6:H1 (strain CFT073 / ATCC 700928 / UPEC).